We begin with the raw amino-acid sequence, 583 residues long: Proteasome-associated ATPase (583 aa).

A coiled-coil region spans residues 2-90 (ASREDRDAAN…REEVDRLAQP (89 aa)). Residue 271–276 (GCGKTL) participates in ATP binding. Residues 582–583 (YL) are docks into pockets in the proteasome alpha-ring.

The protein belongs to the AAA ATPase family. As to quaternary structure, homohexamer. Assembles into a hexameric ring structure that caps the 20S proteasome core. Strongly interacts with the prokaryotic ubiquitin-like protein Pup through a hydrophobic interface; the interacting region of ARC lies in its N-terminal coiled-coil domain. There is one Pup binding site per ARC hexamer ring. Upon ATP-binding, the C-terminus of ARC interacts with the alpha-rings of the proteasome core, possibly by binding to the intersubunit pockets.

It functions in the pathway protein degradation; proteasomal Pup-dependent pathway. Its function is as follows. ATPase which is responsible for recognizing, binding, unfolding and translocation of pupylated proteins into the bacterial 20S proteasome core particle. May be essential for opening the gate of the 20S proteasome via an interaction with its C-terminus, thereby allowing substrate entry and access to the site of proteolysis. Thus, the C-termini of the proteasomal ATPase may function like a 'key in a lock' to induce gate opening and therefore regulate proteolysis. The protein is Proteasome-associated ATPase of Acidothermus cellulolyticus (strain ATCC 43068 / DSM 8971 / 11B).